Here is a 351-residue protein sequence, read N- to C-terminus: MQVEVKLKENAYKVYIDELEELEFDSKVFILSNPKISGLHLKTLLSKIKAKEIFIATVKDGEEYKNLSTMEEILNQMFNSKLDRKSVLISFGGGVISDMGGFAASIYQRGIDFINIPTTLLACVDAAVGGKTGVNNNFGKNLIGTFYQPKAVYCESSFLKTLSFRELAAGMAEFIKMAAMFDDSILDFIEKIDEKSFLNATCENEIFTQIIARSIELKSRVVEQDEKESGLRMLLNYGHTFAHVIENFTDYKLYLHGEAVAIGMVMANQLALNLGLLDKMQSQKIKDILLKFGLPISYKINNVDEFYEAFFMDKKSSNKKINFVLASPLGKGFIKGDISKEDIIATLREFQ.

NAD(+) contacts are provided by residues 60–65, 94–98, 118–119, Lys-131, Lys-140, and 158–161; these read DGEEYK, GVISD, TT, and FLKT. Zn(2+) contacts are provided by Glu-173, His-239, and His-256.

It belongs to the sugar phosphate cyclases superfamily. Dehydroquinate synthase family. Co(2+) is required as a cofactor. It depends on Zn(2+) as a cofactor. The cofactor is NAD(+).

Its subcellular location is the cytoplasm. It carries out the reaction 7-phospho-2-dehydro-3-deoxy-D-arabino-heptonate = 3-dehydroquinate + phosphate. It functions in the pathway metabolic intermediate biosynthesis; chorismate biosynthesis; chorismate from D-erythrose 4-phosphate and phosphoenolpyruvate: step 2/7. In terms of biological role, catalyzes the conversion of 3-deoxy-D-arabino-heptulosonate 7-phosphate (DAHP) to dehydroquinate (DHQ). The polypeptide is 3-dehydroquinate synthase (Campylobacter jejuni subsp. jejuni serotype O:23/36 (strain 81-176)).